Reading from the N-terminus, the 322-residue chain is uncharacterized protein (322 aa).

Positions 1–63 (MFKIRKRSVP…DEASSSDSHY (63 aa)) are disordered. The segment covering 34–49 (FVDDHGKPIAEYRDFP) has biased composition (basic and acidic residues). Residues 245-274 (WKVDRICTYYINRPDKCTRGDNCRFKHDDV) form a C3H1-type zinc finger. Residues 278 to 322 (HRQKEIQSSRNQSWHHRTSSHKYSSENSDHRGYRRHRSRSPHARQ) are disordered. Basic residues predominate over residues 309 to 322 (GYRRHRSRSPHARQ).

This is an uncharacterized protein from Caenorhabditis elegans.